A 444-amino-acid polypeptide reads, in one-letter code: MKLYAPWQRAFEKIATPFEQFLHAQTTTGLMLMLMTVVALLLANSPLSDEYLHIFHTNIDIFVGNYGFSKSIHHWINDGLMAIFFFIIGLEIKRNILVGELSNIKVAMLPILAAIGGMALPALIYYAINYGDIGEAGWGIPMATDIAFAISALVLLGRRVSASLVTFLVALAIVDDLGAVVVIALFYTQEINMLPLLFAFISFLVLVSFNRFGIHAILPYFVVGFIMWLFMLESGIHATVAGVIAAMAIPSRPKYTPMDFTKSVKSRLDEYDNYPIEDNYMLHEQQKAILQNVKDKIDAISSPSARLEHSLHLPVSLVVIPLFALANAGVSINFSSAYDTLLQPISLGVMAGLVFGKVFGIAGISYLAIKLGIAKLPEGSTMSQVFGVAFLGGIGFTMSIFIAELAFAGNSELVFQAKIGILAASLFAGIFGFIWLRFIAKSAN.

11 helical membrane-spanning segments follow: residues Thr27–Leu47, Ile72–Ile92, Met108–Ile128, Ala136–Leu156, Phe167–Tyr187, Glu190–Asn210, Phe212–Leu232, His312–Ile332, Val349–Ile369, Val385–Leu405, and Ile419–Ile439.

It belongs to the NhaA Na(+)/H(+) (TC 2.A.33) antiporter family.

The protein localises to the cell inner membrane. It carries out the reaction Na(+)(in) + 2 H(+)(out) = Na(+)(out) + 2 H(+)(in). Na(+)/H(+) antiporter that extrudes sodium in exchange for external protons. The polypeptide is Na(+)/H(+) antiporter NhaA (Sulfurimonas denitrificans (strain ATCC 33889 / DSM 1251) (Thiomicrospira denitrificans (strain ATCC 33889 / DSM 1251))).